A 302-amino-acid polypeptide reads, in one-letter code: tRNA dimethylallyltransferase (302 aa).

9–16 (GPTGTGKS) serves as a coordination point for ATP. 11 to 16 (TGTGKS) contributes to the substrate binding site.

It belongs to the IPP transferase family. As to quaternary structure, monomer. Mg(2+) is required as a cofactor.

The catalysed reaction is adenosine(37) in tRNA + dimethylallyl diphosphate = N(6)-dimethylallyladenosine(37) in tRNA + diphosphate. Its function is as follows. Catalyzes the transfer of a dimethylallyl group onto the adenine at position 37 in tRNAs that read codons beginning with uridine, leading to the formation of N6-(dimethylallyl)adenosine (i(6)A). The chain is tRNA dimethylallyltransferase from Mycolicibacterium smegmatis (strain ATCC 700084 / mc(2)155) (Mycobacterium smegmatis).